A 299-amino-acid chain; its full sequence is MAELGLNEHHQNEYINYMRFARSKRGLRLKTVDSCFQDLKESRLVEETFTIDEVSEVLNGLQAVVHSEVESELINTAYTNVLLLRQLLAQAEKWYLKLQTDISELENRELLEQVAEFEKAEITSSNKKPILDITKPKLAPLNEGGTAELLNKEILRLQEENEKLKSRLKTIEIQATSALDEKSKLEKALQDLQLDQGNQKDFIKAQDLSNLENTVAALKSEFQKTLNDKTENQKSLEENLATAKHDLLRVQEQLHMAEKELEKKFQQTAAYRNMKEILTKKNDQIKDLRKRLAQYEPED.

Residues 88-296 (LAQAEKWYLK…DLRKRLAQYE (209 aa)) are a coiled coil. The interval 145–299 (GTAELLNKEI…KRLAQYEPED (155 aa)) is interaction with BSS9.

The protein belongs to the LZTFL1 family. As to quaternary structure, self-associates. Interacts with BBS9; the interaction mediates the association of LZTL1 with the BBsome complex and regulates BBSome ciliary trafficking.

Its subcellular location is the cytoplasm. Regulates ciliary localization of the BBSome complex. Together with the BBSome complex, controls SMO ciliary trafficking and contributes to the sonic hedgehog (SHH) pathway regulation. May play a role in neurite outgrowth. May have tumor suppressor function. The sequence is that of Leucine zipper transcription factor-like protein 1 (LZTFL1) from Macaca fascicularis (Crab-eating macaque).